Consider the following 418-residue polypeptide: AP-3 complex subunit mu-2 (418 aa).

An MHD domain is found at 176–417; it reads NNEAYFDVVE…MTKAGKFQVR (242 aa).

This sequence belongs to the adaptor complexes medium subunit family. In terms of assembly, adaptor protein complex 3 (AP-3) is a heterotetramer composed of two large adaptins (delta-type subunit AP3D1 and beta-type subunit AP3B1 or AP3B2), a medium adaptin (mu-type subunit AP3M1 or AP3M2) and a small adaptin (sigma-type subunit APS1 or AP3S2). AP-3 associates with the BLOC-1 complex.

Its subcellular location is the golgi apparatus. It is found in the cytoplasmic vesicle membrane. Functionally, component of the adaptor complexes which link clathrin to receptors in coated vesicles. Clathrin-associated protein complexes are believed to interact with the cytoplasmic tails of membrane proteins, leading to their selection and concentration. Ap47 is a subunit of the plasma membrane adaptor. In concert with the BLOC-1 complex, AP-3 is required to target cargos into vesicles assembled at cell bodies for delivery into neurites and nerve terminals. In Rattus norvegicus (Rat), this protein is AP-3 complex subunit mu-2 (Ap3m2).